Consider the following 225-residue polypeptide: MATYALQMAALVLGGVGMVGTVAVTIMPQWRVSAFIESNIVVFENRWEGLWMNCMRHANIRMQCKVYDSLLALSPDLQASRGLMCAASVLAFLAFMTAILGMKCTRCTGDDENVKSRILLTAGIIFFITGLVVLIPVSWVANSIIRDFYNPLVDVALKRELGEALYIGWTTALVLIAGGALFCCVFCCTERSNSYRYSVPSHRTTQRSFHAEKRSPSIYSKSQYV.

Topologically, residues 1 to 7 are cytoplasmic; that stretch reads MATYALQ. The helical transmembrane segment at 8-28 threads the bilayer; sequence MAALVLGGVGMVGTVAVTIMP. The Extracellular segment spans residues 29–81; sequence QWRVSAFIESNIVVFENRWEGLWMNCMRHANIRMQCKVYDSLLALSPDLQASR. A helical membrane pass occupies residues 82–102; that stretch reads GLMCAASVLAFLAFMTAILGM. At 103-117 the chain is on the cytoplasmic side; the sequence is KCTRCTGDDENVKSR. Residues 118-138 traverse the membrane as a helical segment; sequence ILLTAGIIFFITGLVVLIPVS. Topologically, residues 139–166 are extracellular; the sequence is WVANSIIRDFYNPLVDVALKRELGEALY. Residues 167-187 form a helical membrane-spanning segment; the sequence is IGWTTALVLIAGGALFCCVFC. The Cytoplasmic segment spans residues 188-225; that stretch reads CTERSNSYRYSVPSHRTTQRSFHAEKRSPSIYSKSQYV. Residue K213 forms a Glycyl lysine isopeptide (Lys-Gly) (interchain with G-Cter in ubiquitin) linkage. Residues 224 to 225 form an interactions with TJP1, TJP2 and TJP3 region; sequence YV.

It belongs to the claudin family. As to quaternary structure, can form heteropolymeric strands with other claudins. Interacts with CLDN4. Directly interacts with TJP1/ZO-1, TJP2/ZO-2 and TJP3/ZO-3. Interacts with KLHL3. In terms of processing, ubiquitinated by the BCR(KLHL3) E3 ubiquitin ligase complex in the kidney, leading to its degradation. Expressed primarily in lung and kidney. Present in both cortical and medullar collecting ducts (at protein level).

Its subcellular location is the cell junction. It is found in the tight junction. It localises to the cell membrane. It carries out the reaction chloride(in) = chloride(out). The catalysed reaction is bromide(in) = bromide(out). It catalyses the reaction iodide(out) = iodide(in). The enzyme catalyses fluoride(in) = fluoride(out). In terms of biological role, can associate with other claudins to regulate tight junction structural and functional strand dynamics. May coassemble with CLDN4 into tight junction strands containing anion-selective channels that convey paracellular chloride permeability in renal collecting ducts. Cannot form tight junction strands on its own. This is Claudin-8 from Mus musculus (Mouse).